A 427-amino-acid chain; its full sequence is Enolase (427 aa).

Gln163 contacts (2R)-2-phosphoglycerate. The Proton donor role is filled by Glu205. Residues Asp242, Glu285, and Asp312 each contribute to the Mg(2+) site. 4 residues coordinate (2R)-2-phosphoglycerate: Lys337, Arg366, Ser367, and Lys388. Residue Lys337 is the Proton acceptor of the active site.

This sequence belongs to the enolase family. Requires Mg(2+) as cofactor.

The protein resides in the cytoplasm. It localises to the secreted. It is found in the cell surface. It catalyses the reaction (2R)-2-phosphoglycerate = phosphoenolpyruvate + H2O. It participates in carbohydrate degradation; glycolysis; pyruvate from D-glyceraldehyde 3-phosphate: step 4/5. Catalyzes the reversible conversion of 2-phosphoglycerate (2-PG) into phosphoenolpyruvate (PEP). It is essential for the degradation of carbohydrates via glycolysis. The chain is Enolase from Leptothrix cholodnii (strain ATCC 51168 / LMG 8142 / SP-6) (Leptothrix discophora (strain SP-6)).